A 414-amino-acid polypeptide reads, in one-letter code: MKIYLVGGAVRDSLLGLPVTEKDWVVVGATPEDLLAQGYQQVGKDFPVFLHPVSHDEYALARTERKSGKGYTGFVCHAAPDVTLEQDLLRRDLTINAIARTEQGDLIDPYHGRRDLENHVLRHVSDAFSEDPLRVLRVARFAARFAHLGFQIAEETMALMQKMAHEGELAYLTPERVWKETEKALGTSSPDVYFQVLRDCGALAVLFPEIDNLYGVPAPAKWHPEIDTGIHTMMTVAMAARLSPEIDVRFATLCHDLGKGLTPPELWPRHHGHGPAGVKLVEALCQRLRVPNPIRDLAKLVAEYHDLIHTVQVLQPKTLLKLFDAIDVWRKPQRLEQLALTSEADARGRAGFEDTPYPQGDYLREAFRVASQVSSAGVVADGFKGIDVRNELTRRRTQALADWKAQQPDASATS.

The ATP site is built by Gly8 and Arg11. CTP-binding residues include Gly8 and Arg11. Positions 21 and 23 each coordinate Mg(2+). The ATP site is built by Arg91, Arg137, and Arg140. Residues Arg91, Arg137, and Arg140 each coordinate CTP. The region spanning 228-329 (TGIHTMMTVA…LKLFDAIDVW (102 aa)) is the HD domain.

Belongs to the tRNA nucleotidyltransferase/poly(A) polymerase family. Bacterial CCA-adding enzyme type 1 subfamily. Monomer. Can also form homodimers and oligomers. Mg(2+) is required as a cofactor. The cofactor is Ni(2+).

The catalysed reaction is a tRNA precursor + 2 CTP + ATP = a tRNA with a 3' CCA end + 3 diphosphate. It catalyses the reaction a tRNA with a 3' CCA end + 2 CTP + ATP = a tRNA with a 3' CCACCA end + 3 diphosphate. Its function is as follows. Catalyzes the addition and repair of the essential 3'-terminal CCA sequence in tRNAs without using a nucleic acid template. Adds these three nucleotides in the order of C, C, and A to the tRNA nucleotide-73, using CTP and ATP as substrates and producing inorganic pyrophosphate. tRNA 3'-terminal CCA addition is required both for tRNA processing and repair. Also involved in tRNA surveillance by mediating tandem CCA addition to generate a CCACCA at the 3' terminus of unstable tRNAs. While stable tRNAs receive only 3'-terminal CCA, unstable tRNAs are marked with CCACCA and rapidly degraded. The protein is Multifunctional CCA protein of Pectobacterium carotovorum subsp. carotovorum (strain PC1).